The chain runs to 213 residues: tRNA (guanine-N(7)-)-methyltransferase (213 aa).

Residues E38, E63, D91, and D113 each coordinate S-adenosyl-L-methionine. The active site involves D113. Residues K117, D149, and 192–195 each bind substrate; that span reads TEYE.

This sequence belongs to the class I-like SAM-binding methyltransferase superfamily. TrmB family.

The enzyme catalyses guanosine(46) in tRNA + S-adenosyl-L-methionine = N(7)-methylguanosine(46) in tRNA + S-adenosyl-L-homocysteine. Its pathway is tRNA modification; N(7)-methylguanine-tRNA biosynthesis. Catalyzes the formation of N(7)-methylguanine at position 46 (m7G46) in tRNA. The chain is tRNA (guanine-N(7)-)-methyltransferase from Mycoplasmoides gallisepticum (strain R(low / passage 15 / clone 2)) (Mycoplasma gallisepticum).